Here is a 170-residue protein sequence, read N- to C-terminus: MPNADSRFGRLGWLVLSLLVLVIDQVSKAHFEGSLEMFQQIVVIPDYFSWTLAYNTGAAFSFLADGGGWQRWLFAVIAVVVSAVLVVWLKRLGRDDTWLAIALALVLGGALGNLYDRIALGHVIDFILVHWQNRHYFPAFNFADSAITVGAIMLALDMFKSKKTGETVND.

The next 4 helical transmembrane spans lie at 11 to 31, 41 to 61, 69 to 89, and 95 to 115; these read LGWLVLSLLVLVIDQVSKAHF, IVVIPDYFSWTLAYNTGAAFS, WQRWLFAVIAVVVSAVLVVWL, and DDTWLAIALALVLGGALGNLY. Active-site residues include D125 and D144. A helical membrane pass occupies residues 136 to 156; sequence YFPAFNFADSAITVGAIMLAL.

Belongs to the peptidase A8 family.

The protein resides in the cell inner membrane. The enzyme catalyses Release of signal peptides from bacterial membrane prolipoproteins. Hydrolyzes -Xaa-Yaa-Zaa-|-(S,diacylglyceryl)Cys-, in which Xaa is hydrophobic (preferably Leu), and Yaa (Ala or Ser) and Zaa (Gly or Ala) have small, neutral side chains.. It participates in protein modification; lipoprotein biosynthesis (signal peptide cleavage). Its function is as follows. This protein specifically catalyzes the removal of signal peptides from prolipoproteins. In Pseudomonas fluorescens, this protein is Lipoprotein signal peptidase.